The primary structure comprises 111 residues: uncharacterized protein (111 aa).

Transmembrane regions (helical) follow at residues 22-42 (ASLICLHTLSLVSFSFLANIT), 48-68 (LTPAGIIESIPVVFTAVVSVL), and 75-95 (VLVTVSVVLFKISLGAIPKIL).

It localises to the membrane. This is an uncharacterized protein from Saccharomyces cerevisiae (strain ATCC 204508 / S288c) (Baker's yeast).